The following is a 382-amino-acid chain: Galactokinase (382 aa).

34 to 37 (EHTD) is a substrate binding site. 124 to 130 (GAGLSSS) contacts ATP. Residues Ser130 and Glu162 each contribute to the Mg(2+) site. Residue Asp174 is the Proton acceptor of the active site. Tyr223 contributes to the substrate binding site.

It belongs to the GHMP kinase family. GalK subfamily.

The protein localises to the cytoplasm. The catalysed reaction is alpha-D-galactose + ATP = alpha-D-galactose 1-phosphate + ADP + H(+). The protein operates within carbohydrate metabolism; galactose metabolism. Catalyzes the transfer of the gamma-phosphate of ATP to D-galactose to form alpha-D-galactose-1-phosphate (Gal-1-P). The chain is Galactokinase from Salmonella choleraesuis (strain SC-B67).